Here is a 477-residue protein sequence, read N- to C-terminus: Glutamate--tRNA ligase (477 aa).

The 'HIGH' region motif lies at 12 to 22 (PSPTGMFHVGG). Positions 106, 108, 128, and 130 each coordinate Zn(2+). The 'KMSKS' region signature appears at 238–242 (KLSKR). Lys241 lines the ATP pocket.

This sequence belongs to the class-I aminoacyl-tRNA synthetase family. Glutamate--tRNA ligase type 1 subfamily. As to quaternary structure, monomer. The cofactor is Zn(2+).

The protein localises to the cytoplasm. The catalysed reaction is tRNA(Glu) + L-glutamate + ATP = L-glutamyl-tRNA(Glu) + AMP + diphosphate. Its function is as follows. Catalyzes the attachment of glutamate to tRNA(Glu) in a two-step reaction: glutamate is first activated by ATP to form Glu-AMP and then transferred to the acceptor end of tRNA(Glu). In Thermobifida fusca (strain YX), this protein is Glutamate--tRNA ligase.